Reading from the N-terminus, the 368-residue chain is Transcription factor TGA7 (368 aa).

The span at His-70 to Asp-82 shows a compositional bias: polar residues. The segment at His-70–Arg-89 is disordered. The bZIP domain maps to His-91–Gly-151. Coiled-coil stretches lie at residues Asp-92–Leu-142 and Asp-252–Glu-285. Residues Lys-93–Lys-113 form a basic motif region. Residues Leu-119–Leu-133 are leucine-zipper. The DOG1 domain occupies Ile-152–Arg-363.

Belongs to the bZIP family. In terms of assembly, binds DNA as a dimer. Interacts with NPR1 and NPR4. Interacts with GRXC7/ROXY1.

It is found in the nucleus. Transcriptional activator that binds specifically to the DNA sequence 5'-TGACG-3'. Recognizes ocs elements like the as-1 motif of the cauliflower mosaic virus 35S promoter. Binding to the as-1-like cis elements mediate auxin- and salicylic acid-inducible transcription. May be involved in the induction of the systemic acquired resistance (SAR) via its interaction with NPR1. The polypeptide is Transcription factor TGA7 (TGA7) (Arabidopsis thaliana (Mouse-ear cress)).